A 214-amino-acid chain; its full sequence is Adenylate kinase (214 aa).

10-15 (GAGKGT) is a binding site for ATP. The interval 30–59 (STGDMLRAAVKAGTPLGLEAKKVMDAGQLV) is NMP. AMP is bound by residues Thr31, Arg36, 57 to 59 (QLV), 85 to 88 (GFPR), and Gln92. Residues 122 to 159 (GRRVHPGSGRVYHVVFNPPKVEGKDDVTGEDLVIRPDD) are LID. Residues Arg123 and 132–133 (VY) contribute to the ATP site. AMP contacts are provided by Arg156 and Arg167. Gln200 is a binding site for ATP.

This sequence belongs to the adenylate kinase family. In terms of assembly, monomer.

It localises to the cytoplasm. It carries out the reaction AMP + ATP = 2 ADP. The protein operates within purine metabolism; AMP biosynthesis via salvage pathway; AMP from ADP: step 1/1. In terms of biological role, catalyzes the reversible transfer of the terminal phosphate group between ATP and AMP. Plays an important role in cellular energy homeostasis and in adenine nucleotide metabolism. The polypeptide is Adenylate kinase (Shewanella amazonensis (strain ATCC BAA-1098 / SB2B)).